The sequence spans 183 residues: Large ribosomal subunit protein mL43 (183 aa).

2 disordered regions span residues His120–Gly144 and Pro162–Glu183. Residues Asp122–Pro139 are compositionally biased toward polar residues. A compositionally biased stretch (basic and acidic residues) spans Pro162–Ile172.

Belongs to the mitochondrion-specific ribosomal protein mL43 family. In terms of assembly, component of the mitochondrial ribosome large subunit (39S) which comprises a 16S rRNA and about 50 distinct proteins. As to expression, ubiquitous with the highest levels in the liver, heart and kidneys. The skeletal muscle, brain and testis showed lower but detectable expression. Expression is coregulated with TWNK.

Its subcellular location is the mitochondrion. The protein is Large ribosomal subunit protein mL43 (Mrpl43) of Mus musculus (Mouse).